The following is a 197-amino-acid chain: MKDLTERQRKVLLFIEEFIEKNGYPPSVREIARRFRITPRGALLHLIALEKKGYIERKNGKPRALRVSKSIRNKIPLIGEIRAGEKREAVEYLEDYIEIPESFLSSGYDHFLLKVKGESMIEEHICDGDLVLVRRQDWAQNGDIVVAMVDGEVTLKKFYQRGDTVELRPANREMSSMFFKAEKVKILGKVVGVFRKL.

Residues 28–47 (VREIARRFRITPRGALLHLI) constitute a DNA-binding region (H-T-H motif). Catalysis depends on for autocatalytic cleavage activity residues Ser119 and Lys156.

The protein belongs to the peptidase S24 family. In terms of assembly, homodimer.

It carries out the reaction Hydrolysis of Ala-|-Gly bond in repressor LexA.. In terms of biological role, represses a number of genes involved in the response to DNA damage (SOS response), including recA and lexA. In the presence of single-stranded DNA, RecA interacts with LexA causing an autocatalytic cleavage which disrupts the DNA-binding part of LexA, leading to derepression of the SOS regulon and eventually DNA repair. The chain is LexA repressor from Thermotoga petrophila (strain ATCC BAA-488 / DSM 13995 / JCM 10881 / RKU-1).